A 505-amino-acid chain; its full sequence is Nostrin (505 aa).

Residues 1–260 (MRDPLTDCSY…AISKIDIEKD (260 aa)) enclose the F-BAR domain. 3 coiled-coil regions span residues 101-128 (AHQV…LVIS), 160-222 (ITTE…RIQL), and 295-332 (KERQ…AYSS). Position 114 is a phosphoserine (S114). Residues 292–372 (AMSKERQTSS…SYKLSSVLAE (81 aa)) form the REM-1 domain. One can recognise an SH3 domain in the interval 437–496 (LGNGLCKALYPFQARQDDELDLEKGDIVTIHKKKDEGWWFGSLKGKKGHFPAAYVEELPL). At S478 the chain carries Phosphoserine.

Homotrimer. Interacts with DAB2. Interacts with NOS3, DNM2, WASL and CAV1. Interacts (via SH3 domain) with DNM2; this interaction allows the recruitment of NOS3 to dynamin-positive structures. As to expression, present in pulmonary arterial endothelial cells (at protein level).

It localises to the cell membrane. The protein resides in the cytoplasmic vesicle. Its subcellular location is the cytoplasm. It is found in the cytoskeleton. Multivalent adapter protein which may decrease NOS3 activity by inducing its translocation away from the plasma membrane. In Bos taurus (Bovine), this protein is Nostrin.